Consider the following 2067-residue polypeptide: Non-reducing polyketide synthase PKS12 (2067 aa).

The segment at 4 to 241 (FVFGDQSTRF…LPVPIYAPYH (238 aa)) is N-terminal acylcarrier protein transacylase (SAT) domain. The segment at 350–373 (NSMGPKASTSHSSAETQTESSSKN) is disordered. The segment covering 356–373 (ASTSHSSAETQTESSSKN) has biased composition (polar residues). Positions 373–808 (NSKIAIVAMS…GGNSAVLLQD (436 aa)) constitute a Ketosynthase family 3 (KS3) domain. Catalysis depends on for beta-ketoacyl synthase activity residues cysteine 545, histidine 680, and histidine 725. A malonyl-CoA:ACP transacylase (MAT) domain region spans residues 912–1199 (FVFSGQGAQY…VVCSTFLKSS (288 aa)). Serine 1001 acts as the For acyl/malonyl transferase activity in catalysis. Residues 1297 to 1433 (QKILQETSLD…CELRLEHPSQ (137 aa)) form an N-terminal hotdog fold region. In terms of domain architecture, PKS/mFAS DH spans 1297–1606 (QKILQETSLD…FQGLPRRVLN (310 aa)). Histidine 1329 serves as the catalytic Proton acceptor; for dehydratase activity. The interval 1329–1604 (HRVNGVKVCT…ITFQGLPRRV (276 aa)) is product template (PT) domain. The C-terminal hotdog fold stretch occupies residues 1460 to 1606 (LDSMLATGMV…FQGLPRRVLN (147 aa)). The Proton donor; for dehydratase activity role is filled by aspartate 1519. Positions 1619–1648 (APMGRRDVPPSRMDVPPVRSGEGPPTSAPT) are disordered. Residues 1660-1738 (TSMDSRLRPL…SFKLFLGLVD (79 aa)) form the Carrier domain. Residue serine 1698 is modified to O-(pantetheine 4'-phosphoryl)serine. Positions 1742-1779 (KSSSGSDGSGRSSPAPGIESGATTPPMSEEDQDKIVSS) are disordered. Positions 1743–1754 (SSSGSDGSGRSS) are enriched in low complexity. The interval 1781-2065 (SLHQFQASST…YVSAFLARAL (285 aa)) is claisen cyclase domain. Serine 1875 (for Claisen cyclase activity) is an active-site residue.

It carries out the reaction 6 malonyl-CoA + acetyl-CoA + 6 H(+) = naphtopyrone YWA1 + 6 CO2 + 7 CoA + H2O. Its pathway is pigment biosynthesis. Functionally, non-reducing polyketide synthase; part of the gene cluster that mediates the biosynthesis of aurofusarin, a red mycelium pigment which is acting as a mycotoxin. The first step is performed by the polyketide synthase which condenses one acetyl-CoA and 6 malonyl-CoA units to form the first intermediate, the cyclic heptaketide and yellow pigment YWA1. The C2 hydroxyl group in the pyrone ring of YWA1 is probably formed during ring closure by an aldol-type cyclization reaction. The dehydratase aurZ then acts as the first tailoring enzyme in the aurofusarin biosynthetic pathway by converting YWA1 to nor-rubrofusarin. Nor-rubrofusarin is then methylated to rubrofusarin by the O-methyltransferase aurJ. Rubrofusarin is then transported across the plasma membrane by the rubrofusarin-specific pump aurT for further enzymatic processing by the extracellular complex composed of GIP1, aurF, aurO and aurS to yield aurofusarin. The polypeptide is Non-reducing polyketide synthase PKS12 (Gibberella zeae (strain ATCC MYA-4620 / CBS 123657 / FGSC 9075 / NRRL 31084 / PH-1) (Wheat head blight fungus)).